The chain runs to 988 residues: DExH-box ATP-dependent RNA helicase DExH9 (988 aa).

The disordered stretch occupies residues 1–27; the sequence is MGSVKRKSVEESSDSAPPQKVQREDDS. The region spanning 76–232 is the Helicase ATP-binding domain; the sequence is IKCLDNGESV…WVAKVHQQPC (157 aa). 89–96 is an ATP binding site; it reads AHTSAGKT. A DEVH box motif is present at residues 180–183; that stretch reads DEVH. The region spanning 307–509 is the Helicase C-terminal domain; the sequence is DIFKLVKMII…SYNMLLNQLR (203 aa).

Belongs to the DExH box helicase family. SKI2 subfamily. Ubiquitous but preferentially expressed in active tissues.

It localises to the nucleus. Its subcellular location is the nucleolus. The catalysed reaction is ATP + H2O = ADP + phosphate + H(+). Functionally, ATP-dependent RNA helicase that associates with the RNA exosome complex. Required for proper rRNA biogenesis and development. Involved in the 3'-processing of the 7S pre-RNA to the mature 5.8S rRNA and also in the removal of rRNA maturation by-products. This is DExH-box ATP-dependent RNA helicase DExH9 from Arabidopsis thaliana (Mouse-ear cress).